We begin with the raw amino-acid sequence, 288 residues long: Coiled-coil domain-containing protein 190 (288 aa).

A coiled-coil region spans residues 16–69 (LERKSARQAEARLSLRLQRLEIICLYHVKSLAREQRQLQKELQRLQQDIIKKRF). A disordered region spans residues 141 to 235 (GERTSCFKEG…SSVDYAGSFK (95 aa)). Over residues 177-188 (HDQELSTNKTED) the composition is skewed to basic and acidic residues. Over residues 203–213 (ANETRSENASQ) the composition is skewed to polar residues.

The polypeptide is Coiled-coil domain-containing protein 190 (Ccdc190) (Mus musculus (Mouse)).